Reading from the N-terminus, the 144-residue chain is uncharacterized protein (144 aa).

The next 4 membrane-spanning stretches (helical) occupy residues 27–47, 49–69, 83–103, and 106–126; these read VVCA…IPDI, LLPI…LLAL, IVLL…DATV, and ALDM…ILNV.

The protein localises to the membrane. This is an uncharacterized protein from Saccharomyces cerevisiae (strain ATCC 204508 / S288c) (Baker's yeast).